The following is a 165-amino-acid chain: Transmembrane protein 128 (165 aa).

The next 4 helical transmembrane spans lie at 49-69 (NIHS…VDFF), 81-101 (WFLF…YCIV), 119-139 (LIPI…VALW), and 144-164 (FFTP…TSLL).

The protein resides in the membrane. This is Transmembrane protein 128 (TMEM128) from Bos taurus (Bovine).